A 529-amino-acid polypeptide reads, in one-letter code: MCTPDENDYKTSTDPDTSANTNHTLEKKKRKKRKNTNVACVNCSRLHVSCEAKRPCLRCISKGLTATCVDAPRKKSKYLAGIPNRELPMSIQPDLPPRKIMIPIYNNSSNSSLNVNNMGEQQKFTSPQHIVHKAKFLSNAADSEYSILSNIIYQDTLSNKIPIDILYSNTNSTSNSTIGNSSNNSPTGTNTSPEETEMEKIRQLYSEQRANMPPHPYPSSNQNVYSILLGPNSAKIVASQVNLFANHFPLVPVDSADNSLNFKRLLPRDPSEKSSQINWDSSINQYYLNSETVTFPELAIPLKRRKNHLVSVSLESCSPDAANIKSNVGWEHSLRYSTPMEIYTSINAPFSHTPGFHHLLVYLKHRFNQQDLVKMCRSIAEFRPIFIACSVTLTEEDMIFMEQCYQRTLLEYVKFIAQIGTPTCIWRRNGQISYVNEEFEILCGWTREELLNKMTFIVEIMDDESVRDYFKTLSKVAYRDFRGSEKMKVCRLLSPIKGKIIHCCCMWTLKRDVSGLPLMILGNFMPILN.

The interval 1-31 (MCTPDENDYKTSTDPDTSANTNHTLEKKKRK) is disordered. Residues 14–23 (DPDTSANTNH) show a composition bias toward polar residues. A DNA-binding region (zn(2)-C6 fungal-type) is located at residues 40–68 (CVNCSRLHVSCEAKRPCLRCISKGLTATC). Residues 174 to 193 (SNSTIGNSSNNSPTGTNTSP) show a composition bias toward low complexity. The tract at residues 174–198 (SNSTIGNSSNNSPTGTNTSPEETEM) is disordered. One can recognise a PAS domain in the interval 408-480 (TLLEYVKFIA…KTLSKVAYRD (73 aa)).

It belongs to the ERT1/acuK family.

The protein localises to the nucleus. In terms of biological role, transcription factor which regulates nonfermentable carbon utilization. Activator of gluconeogenetic genes. In Saccharomyces cerevisiae (strain JAY291) (Baker's yeast), this protein is Transcription activator of gluconeogenesis (ERT1).